The chain runs to 388 residues: Muscleblind-like protein 1 (388 aa).

Position 6 is a phosphothreonine (Thr-6). C3H1-type zinc fingers lie at residues 13-41 (WLTLEVCREFQRGTCSRPDTECKFAHPSK), 47-73 (NGRVIACFDSLKGRCSRENCKYLHPPP), 179-207 (TDRLEVCREYQRGNCNRGENDCRFAHPAD), and 215-241 (DNTVTVCMDYIKGRCSREKCKYFHPPA).

Belongs to the muscleblind family. As to quaternary structure, interacts with DDX1 and YBX1. Interacts with HNRNPH1; the interaction in RNA-independent. Interacts with RBPMS; the interaction allows cooperative assembly of RNA-bound stable cell-specific alternative splicing regulatory complexes. Highly expressed in cardiac, skeletal muscle and during myoblast differentiation. Weakly expressed in other tissues (at protein level). Expressed in heart, brain, placenta, lung, liver, skeletal muscle, kidney and pancreas.

It is found in the nucleus. Its subcellular location is the cytoplasm. It localises to the cytoplasmic granule. Functionally, mediates pre-mRNA alternative splicing regulation. Acts either as activator or repressor of splicing on specific pre-mRNA targets. Inhibits cardiac troponin-T (TNNT2) pre-mRNA exon inclusion but induces insulin receptor (IR) pre-mRNA exon inclusion in muscle. Antagonizes the alternative splicing activity pattern of CELF proteins. Regulates the TNNT2 exon 5 skipping through competition with U2AF2. Inhibits the formation of the spliceosome A complex on intron 4 of TNNT2 pre-mRNA. Binds to the stem-loop structure within the polypyrimidine tract of TNNT2 intron 4 during spliceosome assembly. Binds to the 5'-YGCU(U/G)Y-3'consensus sequence. Binds to the IR RNA. Binds to expanded CUG repeat RNA, which folds into a hairpin structure containing GC base pairs and bulged, unpaired U residues. Together with RNA binding proteins RBPMS and RBFOX2, activates vascular smooth muscle cells alternative splicing events. Regulates NCOR2 alternative splicing. The protein is Muscleblind-like protein 1 (MBNL1) of Homo sapiens (Human).